The following is a 168-amino-acid chain: Large ribosomal subunit protein uL10 (168 aa).

Belongs to the universal ribosomal protein uL10 family. In terms of assembly, part of the ribosomal stalk of the 50S ribosomal subunit. The N-terminus interacts with L11 and the large rRNA to form the base of the stalk. The C-terminus forms an elongated spine to which L12 dimers bind in a sequential fashion forming a multimeric L10(L12)X complex.

Functionally, forms part of the ribosomal stalk, playing a central role in the interaction of the ribosome with GTP-bound translation factors. This is Large ribosomal subunit protein uL10 from Acinetobacter baylyi (strain ATCC 33305 / BD413 / ADP1).